The following is a 335-amino-acid chain: 2,4-dienoyl-CoA reductase [(3E)-enoyl-CoA-producing], mitochondrial (335 aa).

The transit peptide at 1-34 (MKLPARVFFTLGSRLPCGLAPRRFFSYGTKILYQ) directs the protein to the mitochondrion. Residues lysine 42 and lysine 49 each carry the N6-acetyllysine; alternate modification. An N6-succinyllysine; alternate mark is found at lysine 42 and lysine 49. 66-71 (GGGTGL) is a binding site for NADP(+). Threonine 69 carries the phosphothreonine modification. Lysine 73 carries the N6-succinyllysine modification. Arginine 91 serves as a coordination point for NADP(+). Arginine 91 lines the substrate pocket. N6-acetyllysine; alternate is present on lysine 97. Lysine 97 is subject to N6-succinyllysine; alternate. Residue aspartate 117 coordinates NADP(+). Positions 119, 149, and 157 each coordinate substrate. Tyrosine 199 serves as the catalytic Proton acceptor. Residue lysine 214 participates in NADP(+) binding. An N6-acetyllysine modification is found at lysine 230. 240 to 243 (PGPI) provides a ligand contact to NADP(+). Lysine 244 is modified (N6-acetyllysine; alternate). Lysine 244 is subject to N6-succinyllysine; alternate. Residue arginine 251 participates in substrate binding. N6-acetyllysine; alternate is present on residues lysine 260 and lysine 319. 2 positions are modified to N6-succinyllysine; alternate: lysine 260 and lysine 319.

It belongs to the short-chain dehydrogenases/reductases (SDR) family. 2,4-dienoyl-CoA reductase subfamily. Homotetramer. In terms of tissue distribution, heart = liver = pancreas &gt; kidney &gt;&gt; skeletal muscle = lung.

The protein localises to the mitochondrion. It catalyses the reaction a (2E,4E)-dienoyl-CoA + NADPH + H(+) = a 4,5-saturated-(3E)-enoyl-CoA + NADP(+). The enzyme catalyses a (2E,4Z)-dienoyl-CoA + NADPH + H(+) = a 4,5-saturated-(3E)-enoyl-CoA + NADP(+). The catalysed reaction is (2E,4E)-hexadienoyl-CoA + NADPH + H(+) = (3E)-hexenoyl-CoA + NADP(+). Functionally, auxiliary enzyme of beta-oxidation. It participates in the metabolism of unsaturated fatty enoyl-CoA esters having double bonds in both even- and odd-numbered positions in mitochondria. Catalyzes the NADP-dependent reduction of 2,4-dienoyl-CoA to yield trans-3-enoyl-CoA. The protein is 2,4-dienoyl-CoA reductase [(3E)-enoyl-CoA-producing], mitochondrial (DECR1) of Homo sapiens (Human).